The primary structure comprises 175 residues: tRNA (cytidine(56)-2'-O)-methyltransferase (175 aa).

Residue Leu82 coordinates S-adenosyl-L-methionine.

It belongs to the aTrm56 family. As to quaternary structure, homodimer.

Its subcellular location is the cytoplasm. The enzyme catalyses cytidine(56) in tRNA + S-adenosyl-L-methionine = 2'-O-methylcytidine(56) in tRNA + S-adenosyl-L-homocysteine + H(+). Its function is as follows. Specifically catalyzes the AdoMet-dependent 2'-O-ribose methylation of cytidine at position 56 in tRNAs. This Cenarchaeum symbiosum (strain A) protein is tRNA (cytidine(56)-2'-O)-methyltransferase.